The primary structure comprises 128 residues: Peptidyl-prolyl cis-trans isomerase pin4 (128 aa).

A disordered region spans residues 1 to 35; sequence MGKGNAKNSGGGDKKSKAKAGDAKDDSKGKMKGAQ. A compositionally biased stretch (basic and acidic residues) spans 12-29; it reads GDKKSKAKAGDAKDDSKG. A PpiC domain is found at 34-126; that stretch reads AQSVNVRHIL…YGYHIIMVEG (93 aa).

It belongs to the PpiC/parvulin rotamase family. PIN4 subfamily.

It catalyses the reaction [protein]-peptidylproline (omega=180) = [protein]-peptidylproline (omega=0). In terms of biological role, PPIases accelerate the folding of proteins. It catalyzes the cis-trans isomerization of proline imidic peptide bonds in oligopeptides. The polypeptide is Peptidyl-prolyl cis-trans isomerase pin4 (pin4) (Emericella nidulans (strain FGSC A4 / ATCC 38163 / CBS 112.46 / NRRL 194 / M139) (Aspergillus nidulans)).